The following is a 142-amino-acid chain: Large ribosomal subunit protein uL11 (142 aa).

Positions 84 to 103 are disordered; sequence AGVKSGSGRPNSDKVGTVTD.

The protein belongs to the universal ribosomal protein uL11 family. In terms of assembly, part of the ribosomal stalk of the 50S ribosomal subunit. Interacts with L10 and the large rRNA to form the base of the stalk. L10 forms an elongated spine to which L12 dimers bind in a sequential fashion forming a multimeric L10(L12)X complex. In terms of processing, one or more lysine residues are methylated.

Functionally, forms part of the ribosomal stalk which helps the ribosome interact with GTP-bound translation factors. This Aliivibrio salmonicida (strain LFI1238) (Vibrio salmonicida (strain LFI1238)) protein is Large ribosomal subunit protein uL11.